A 732-amino-acid polypeptide reads, in one-letter code: Calcineurin-interacting protein 2 (732 aa).

Disordered regions lie at residues 1 to 24 (MNRG…REPY), 115 to 169 (DYEP…ALPK), 181 to 232 (QKKD…LDDR), 310 to 351 (ILSR…TSRR), 372 to 397 (RSQS…STVS), and 426 to 708 (QTVT…PLEE). The span at 8–17 (YNRSRSTSSR) shows a compositional bias: polar residues. Over residues 117 to 129 (EPLRKEPELKEQK) the composition is skewed to basic and acidic residues. Composition is skewed to polar residues over residues 151–163 (SGIT…SSRT) and 189–208 (IPRQ…NNEL). Over residues 312–323 (SRSVSTSPSSVT) the composition is skewed to low complexity. Positions 324–351 (DNIPKTSTSRIPSSENPKTMEHTTTSRR) are enriched in polar residues. The segment covering 426 to 439 (QTVTNVRVPSSRGS) has biased composition (polar residues). Basic and acidic residues-rich tracts occupy residues 526–538 (QSPE…RFAD) and 546–557 (PGDHQAREEDLP). Residues 607-619 (SVTPSEKSLPRNS) show a composition bias toward polar residues. The segment covering 688-705 (NSPNKSSSSSKARPSAAP) has biased composition (low complexity).

As to quaternary structure, interacts with tax-6. As to expression, expressed in intestine.

The sequence is that of Calcineurin-interacting protein 2 from Caenorhabditis elegans.